Here is a 135-residue protein sequence, read N- to C-terminus: Large ribosomal subunit protein eL27z (135 aa).

The protein belongs to the eukaryotic ribosomal protein eL27 family.

In Arabidopsis thaliana (Mouse-ear cress), this protein is Large ribosomal subunit protein eL27z (RPL27A).